Consider the following 971-residue polypeptide: 116 kDa U5 small nuclear ribonucleoprotein component (971 aa).

Residue Met1 is modified to N-acetylmethionine. The disordered stretch occupies residues 1 to 52; it reads MDTDLYDEFGNYIGPELDSDEDDDELGRETKDLDEDEDEDEDDVGEHEDDHP. The span at 17–47 shows a compositional bias: acidic residues; that stretch reads LDSDEDDDELGRETKDLDEDEDEDEDDVGEH. The residue at position 19 (Ser19) is a Phosphoserine. Residue Lys63 forms a Glycyl lysine isopeptide (Lys-Gly) (interchain with G-Cter in SUMO1); alternate linkage. Residue Lys63 forms a Glycyl lysine isopeptide (Lys-Gly) (interchain with G-Cter in SUMO2); alternate linkage. The residue at position 85 (Thr85) is a Phosphothreonine. In terms of domain architecture, tr-type G spans 126–408; it reads ELIRNVTLCG…GIHLTKEELK (283 aa). GTP is bound by residues 135–142, 203–207, and 257–260; these read GHLHHGKT, DTPGH, and NKID.

Belongs to the TRAFAC class translation factor GTPase superfamily. Classic translation factor GTPase family. EF-G/EF-2 subfamily. In terms of assembly, component of the U5 snRNP and the U4/U6-U5 tri-snRNP complex, a building block of the spliceosome. The U4/U6-U5 tri-snRNP complex is composed of the U4, U6 and U5 snRNAs and at least PRPF3, PRPF4, PRPF6, PRPF8, PRPF31, SNRNP200, TXNL4A, SNRNP40, DDX23, CD2BP2, PPIH, SNU13, EFTUD2, SART1 and USP39. Component of the pre-catalytic, catalytic and post-catalytic spliceosome complexes. Component of the minor spliceosome, which splices U12-type introns. Within this complex, interacts with CRIPT. Interacts with ERBB4 and PRPF8. Interacts with PIH1D1. Interacts with RPAP3 and URI1 in a ZNHIT2-dependent manner. Interacts with NRDE2. Interacts with FAM50A. Interacts with UBL5.

The protein localises to the nucleus. In terms of biological role, required for pre-mRNA splicing as component of the spliceosome, including pre-catalytic, catalytic and post-catalytic spliceosomal complexes. Component of the U5 snRNP and the U4/U6-U5 tri-snRNP complex, a building block of the spliceosome. As a component of the minor spliceosome, involved in the splicing of U12-type introns in pre-mRNAs. The protein is 116 kDa U5 small nuclear ribonucleoprotein component (Eftud2) of Mus musculus (Mouse).